Consider the following 2390-residue polypeptide: Spectrin beta chain, non-erythrocytic 2 (2390 aa).

Serine 2 bears the N-acetylserine mark. The interval 2–278 (SSTLSPTDFD…IITYVATYYH (277 aa)) is actin-binding. Phosphoserine occurs at positions 6 and 31. 2 Calponin-homology (CH) domains span residues 57-161 (AVQK…LRFQ) and 176-281 (KSAK…HYFS). Spectrin repeat units lie at residues 306 to 414 (LVEK…LALR), 427 to 527 (AARF…RERL), 532 to 639 (ELQK…RLEE), 642 to 744 (RLWR…QRLA), 749 to 849 (LYQF…RALE), and 855 to 954 (YTML…KAAL). A Phosphoserine modification is found at serine 959. Spectrin repeat units lie at residues 960–1063 (IQNY…SLGE), 1066–1169 (RLQD…GRLA), 1174–1262 (FQGF…RHKK), 1279–1379 (EQQH…ARSL), 1384–1485 (RAEL…RRLQ), 1489–1586 (EQHQ…RLED), 1589–1692 (RAQQ…RLQE), 1696–1797 (LCQL…GQVL), 1801–1904 (YELQ…QLLL), 1910–2010 (FRFF…DWLQ), and 2017–2076 (VFGR…EKLT). Serine 1073 carries the phosphoserine modification. Residues 2081–2096 (REKERKRKREEEERRK) show a composition bias toward basic and acidic residues. Disordered stretches follow at residues 2081-2222 (REKE…EQME) and 2331-2390 (SSAS…KKNK). Over residues 2116-2125 (QTASDTTWDG) the composition is skewed to polar residues. Serine 2171 and serine 2199 each carry phosphoserine. The 111-residue stretch at 2218-2328 (QEQMEGMLCR…WLRVVNAAIA (111 aa)) folds into the PH domain. Threonine 2354 is subject to Phosphothreonine. Serine 2359 is subject to Phosphoserine. Residues 2370–2383 (RSKDGREREREKRF) show a composition bias toward basic and acidic residues.

Belongs to the spectrin family. In terms of tissue distribution, highly expressed in brain, kidney, pancreas, and liver, and at lower levels in lung and placenta.

It localises to the cytoplasm. It is found in the cytoskeleton. Its subcellular location is the cell cortex. In terms of biological role, probably plays an important role in neuronal membrane skeleton. The sequence is that of Spectrin beta chain, non-erythrocytic 2 (SPTBN2) from Homo sapiens (Human).